A 505-amino-acid polypeptide reads, in one-letter code: 2-methylcitrate dehydratase (505 aa).

It belongs to the PrpD family. Monomer.

The catalysed reaction is (2S,3S)-2-methylcitrate = 2-methyl-cis-aconitate + H2O. It catalyses the reaction citrate = D-threo-isocitrate. The protein operates within organic acid metabolism; propanoate degradation. It functions in the pathway carbohydrate metabolism; tricarboxylic acid cycle; isocitrate from oxaloacetate: step 1/2. Its function is as follows. Involved in the catabolism of short chain fatty acids (SCFA) via the tricarboxylic acid (TCA)(acetyl degradation route) and via the 2-methylcitrate cycle I (propionate degradation route). Catalyzes the dehydration of 2-methylcitrate (2-MC) to yield the cis isomer of 2-methyl-aconitate. Could also catalyze the dehydration of citrate and the hydration of cis-aconitate. This Mycobacterium tuberculosis (strain ATCC 35801 / TMC 107 / Erdman) protein is 2-methylcitrate dehydratase.